The primary structure comprises 657 residues: Glycogen debranching enzyme (657 aa).

Residue Asp336 is the Nucleophile of the active site. Glu371 acts as the Proton donor in catalysis. The span at 458–467 (NEANGEENRD) shows a compositional bias: basic and acidic residues. The tract at residues 458–479 (NEANGEENRDGTNNNYSNNHGK) is disordered.

This sequence belongs to the glycosyl hydrolase 13 family.

The catalysed reaction is Hydrolysis of (1-&gt;6)-alpha-D-glucosidic linkages to branches with degrees of polymerization of three or four glucose residues in limit dextrin.. It functions in the pathway glycan degradation; glycogen degradation. In terms of biological role, removes maltotriose and maltotetraose chains that are attached by 1,6-alpha-linkage to the limit dextrin main chain, generating a debranched limit dextrin. The sequence is that of Glycogen debranching enzyme from Escherichia coli (strain SE11).